The primary structure comprises 247 residues: 1-(5-phosphoribosyl)-5-[(5-phosphoribosylamino)methylideneamino] imidazole-4-carboxamide isomerase (247 aa).

D8 functions as the Proton acceptor in the catalytic mechanism. The active-site Proton donor is D129.

Belongs to the HisA/HisF family.

It localises to the cytoplasm. The catalysed reaction is 1-(5-phospho-beta-D-ribosyl)-5-[(5-phospho-beta-D-ribosylamino)methylideneamino]imidazole-4-carboxamide = 5-[(5-phospho-1-deoxy-D-ribulos-1-ylimino)methylamino]-1-(5-phospho-beta-D-ribosyl)imidazole-4-carboxamide. It participates in amino-acid biosynthesis; L-histidine biosynthesis; L-histidine from 5-phospho-alpha-D-ribose 1-diphosphate: step 4/9. The polypeptide is 1-(5-phosphoribosyl)-5-[(5-phosphoribosylamino)methylideneamino] imidazole-4-carboxamide isomerase (Bradyrhizobium sp. (strain BTAi1 / ATCC BAA-1182)).